The sequence spans 264 residues: ATP synthase subunit b 1 (264 aa).

The helical transmembrane segment at 2 to 22 threads the bilayer; the sequence is LFDWFTFWAQLLNFLILVWLL. Positions 240 to 264 are disordered; that stretch reads ASSALLDGPDDEMNEEEGHAGKDAD. Residues 255-264 show a composition bias toward basic and acidic residues; sequence EEGHAGKDAD.

This sequence belongs to the ATPase B chain family. In terms of assembly, F-type ATPases have 2 components, F(1) - the catalytic core - and F(0) - the membrane proton channel. F(1) has five subunits: alpha(3), beta(3), gamma(1), delta(1), epsilon(1). F(0) has four main subunits: a(1), b(2) and c(10-14). The alpha and beta chains form an alternating ring which encloses part of the gamma chain. F(1) is attached to F(0) by a central stalk formed by the gamma and epsilon chains, while a peripheral stalk is formed by the delta and b chains.

Its subcellular location is the cell inner membrane. F(1)F(0) ATP synthase produces ATP from ADP in the presence of a proton or sodium gradient. F-type ATPases consist of two structural domains, F(1) containing the extramembraneous catalytic core and F(0) containing the membrane proton channel, linked together by a central stalk and a peripheral stalk. During catalysis, ATP synthesis in the catalytic domain of F(1) is coupled via a rotary mechanism of the central stalk subunits to proton translocation. Functionally, component of the F(0) channel, it forms part of the peripheral stalk, linking F(1) to F(0). The polypeptide is ATP synthase subunit b 1 (Chlorobium luteolum (strain DSM 273 / BCRC 81028 / 2530) (Pelodictyon luteolum)).